Reading from the N-terminus, the 458-residue chain is UDP-N-acetylglucosamine 1-carboxyvinyltransferase (458 aa).

34 to 35 (KN) contacts phosphoenolpyruvate. A UDP-N-acetyl-alpha-D-glucosamine-binding site is contributed by arginine 104. The active-site Proton donor is cysteine 128. Residue cysteine 128 is modified to 2-(S-cysteinyl)pyruvic acid O-phosphothioketal. Residues aspartate 319 and isoleucine 341 each contribute to the UDP-N-acetyl-alpha-D-glucosamine site.

The protein belongs to the EPSP synthase family. MurA subfamily.

Its subcellular location is the cytoplasm. It carries out the reaction phosphoenolpyruvate + UDP-N-acetyl-alpha-D-glucosamine = UDP-N-acetyl-3-O-(1-carboxyvinyl)-alpha-D-glucosamine + phosphate. The protein operates within cell wall biogenesis; peptidoglycan biosynthesis. Functionally, cell wall formation. Adds enolpyruvyl to UDP-N-acetylglucosamine. The chain is UDP-N-acetylglucosamine 1-carboxyvinyltransferase from Prochlorococcus marinus (strain MIT 9515).